A 427-amino-acid polypeptide reads, in one-letter code: MKILTGTINELLNEVKAENNTNNSLQVESEVKSIIEKVKKDGDQALFDFTSQFDGVRLTELRVQTADIQSASSKVDPAFLVALQQAKANIESFHSKQKQHAFLDSEKDGVIRGQLIRPLETVGIYVPGGTAAYPSSVLMNVLPAKIAGVKRIVMITPPAENGINPHVLAAAQLAGVDEIYQVGGAHGIAALAHGTESIPKVDKIVGPGNIYVATAKREVFGLVDIDMIAGPSEIVVLADENANPAFIASDLLSQAEHDILARAILITTSKKIAEETQNEINKQLENLPRKAIAQKSIETQGKIIIAANTQEMFDIMNEIAPEHLEVQLENPMNYLNQIKNAGSIFLGSYASEPLGDYFAGPNHVLPTSGTAKFFSPLGVEDFTKRSAFISYTKEALAKEKDAIVLLAKKEGLDAHAKAIQIRFEEEN.

Positions 232, 254, and 257 each coordinate substrate. The Zn(2+) site is built by Gln254 and His257. Residues Glu322 and His323 each act as proton acceptor in the active site. Substrate is bound by residues His323, Asp356, Glu410, and His415. Asp356 provides a ligand contact to Zn(2+). His415 contacts Zn(2+).

Belongs to the histidinol dehydrogenase family. It depends on Zn(2+) as a cofactor.

It catalyses the reaction L-histidinol + 2 NAD(+) + H2O = L-histidine + 2 NADH + 3 H(+). Its pathway is amino-acid biosynthesis; L-histidine biosynthesis; L-histidine from 5-phospho-alpha-D-ribose 1-diphosphate: step 9/9. Catalyzes the sequential NAD-dependent oxidations of L-histidinol to L-histidinaldehyde and then to L-histidine. This Listeria monocytogenes serovar 1/2a (strain ATCC BAA-679 / EGD-e) protein is Histidinol dehydrogenase.